A 263-amino-acid chain; its full sequence is Hydroxyethylthiazole kinase 1 (263 aa).

Methionine 42 contributes to the substrate binding site. Positions 118 and 164 each coordinate ATP. Glycine 191 is a substrate binding site.

The protein belongs to the Thz kinase family. Mg(2+) is required as a cofactor.

The catalysed reaction is 5-(2-hydroxyethyl)-4-methylthiazole + ATP = 4-methyl-5-(2-phosphooxyethyl)-thiazole + ADP + H(+). Its pathway is cofactor biosynthesis; thiamine diphosphate biosynthesis; 4-methyl-5-(2-phosphoethyl)-thiazole from 5-(2-hydroxyethyl)-4-methylthiazole: step 1/1. In terms of biological role, catalyzes the phosphorylation of the hydroxyl group of 4-methyl-5-beta-hydroxyethylthiazole (THZ). The chain is Hydroxyethylthiazole kinase 1 from Clostridium botulinum (strain Kyoto / Type A2).